The primary structure comprises 82 residues: Vejovine (82 aa).

The signal sequence occupies residues 1 to 22; it reads MNAKTLFVVFLIGMLVTEQVEA. The propeptide occupies 70 to 82; the sequence is MTLDEIVDAMYYD.

Belongs to the non-disulfide-bridged peptide (NDBP) superfamily. Long chain multifunctional peptide (group 2) family. In terms of tissue distribution, expressed by the venom gland.

Its subcellular location is the secreted. The protein localises to the target cell membrane. Displays significant potent antimicrobial activity against clinical isolates of Gram-negative multidrug resistant strains of E.coli, P.aeruginosa and A.baumanii with MIC values as low as 4.4 uM. Additionally, it displays low cytolytic and hemolytic activity against human erythrocytes reaching 50% hemolysis at 100 uM. The polypeptide is Vejovine (Vaejovis mexicanus (Mexican scorpion)).